The chain runs to 474 residues: Aspartyl/glutamyl-tRNA(Asn/Gln) amidotransferase subunit B (474 aa).

The protein belongs to the GatB/GatE family. GatB subfamily. In terms of assembly, heterotrimer of A, B and C subunits.

The catalysed reaction is L-glutamyl-tRNA(Gln) + L-glutamine + ATP + H2O = L-glutaminyl-tRNA(Gln) + L-glutamate + ADP + phosphate + H(+). It catalyses the reaction L-aspartyl-tRNA(Asn) + L-glutamine + ATP + H2O = L-asparaginyl-tRNA(Asn) + L-glutamate + ADP + phosphate + 2 H(+). In terms of biological role, allows the formation of correctly charged Asn-tRNA(Asn) or Gln-tRNA(Gln) through the transamidation of misacylated Asp-tRNA(Asn) or Glu-tRNA(Gln) in organisms which lack either or both of asparaginyl-tRNA or glutaminyl-tRNA synthetases. The reaction takes place in the presence of glutamine and ATP through an activated phospho-Asp-tRNA(Asn) or phospho-Glu-tRNA(Gln). The sequence is that of Aspartyl/glutamyl-tRNA(Asn/Gln) amidotransferase subunit B from Limosilactobacillus fermentum (strain NBRC 3956 / LMG 18251) (Lactobacillus fermentum).